Here is a 44-residue protein sequence, read N- to C-terminus: Cytochrome b559 subunit beta (44 aa).

A helical membrane pass occupies residues 19–35; the sequence is WLSVHALAVPTVFFIGA. H23 contacts heme.

This sequence belongs to the PsbE/PsbF family. Heterodimer of an alpha subunit and a beta subunit. PSII is composed of 1 copy each of membrane proteins PsbA, PsbB, PsbC, PsbD, PsbE, PsbF, PsbH, PsbI, PsbJ, PsbK, PsbL, PsbM, PsbT, PsbX, PsbY, PsbZ, Psb30/Ycf12, peripheral proteins PsbO, CyanoQ (PsbQ), PsbU, PsbV and a large number of cofactors. It forms dimeric complexes. Requires heme b as cofactor.

The protein localises to the cellular thylakoid membrane. Its function is as follows. This b-type cytochrome is tightly associated with the reaction center of photosystem II (PSII). PSII is a light-driven water:plastoquinone oxidoreductase that uses light energy to abstract electrons from H(2)O, generating O(2) and a proton gradient subsequently used for ATP formation. It consists of a core antenna complex that captures photons, and an electron transfer chain that converts photonic excitation into a charge separation. The sequence is that of Cytochrome b559 subunit beta from Rippkaea orientalis (strain PCC 8801 / RF-1) (Cyanothece sp. (strain PCC 8801)).